We begin with the raw amino-acid sequence, 191 residues long: Fe/S biogenesis protein NfuA (191 aa).

2 residues coordinate [4Fe-4S] cluster: Cys149 and Cys152.

Belongs to the NfuA family. Homodimer. Requires [4Fe-4S] cluster as cofactor.

Functionally, involved in iron-sulfur cluster biogenesis. Binds a 4Fe-4S cluster, can transfer this cluster to apoproteins, and thereby intervenes in the maturation of Fe/S proteins. Could also act as a scaffold/chaperone for damaged Fe/S proteins. This chain is Fe/S biogenesis protein NfuA, found in Salmonella arizonae (strain ATCC BAA-731 / CDC346-86 / RSK2980).